Here is an 834-residue protein sequence, read N- to C-terminus: Probable glucan 1,3-beta-glucosidase D (834 aa).

The span at 1–33 (MPSHSRSRDRYGGRDSDREARYDYDYARRRYAT) shows a compositional bias: basic and acidic residues. Disordered stretches follow at residues 1-188 (MPSH…ASHL) and 200-251 (QYEK…TKAR). Topologically, residues 1–306 (MPSHSRSRDR…GGRPFWKRKK (306 aa)) are cytoplasmic. The span at 34–45 (DDNDDDYDDDEL) shows a compositional bias: acidic residues. Composition is skewed to basic and acidic residues over residues 46 to 76 (EHGL…RDAE), 98 to 173 (YGHD…ETAA), 201 to 218 (YEKE…AAKA), and 228 to 245 (VVGE…ESHR). Residues 307-327 (WIGLGALILILVIVIPVAVVV) form a helical; Signal-anchor for type II membrane protein membrane-spanning segment. Topologically, residues 328–834 (SKKHDNKSDP…PDFGNLPEYY (507 aa)) are extracellular. Residues 331-354 (HDNKSDPADPQGTSPGKSNLDGLS) form a disordered region. Residues Asn-333, Asn-379, Asn-384, Asn-396, Asn-549, Asn-561, and Asn-570 are each glycosylated (N-linked (GlcNAc...) asparagine). Glu-600 serves as the catalytic Proton donor. N-linked (GlcNAc...) asparagine glycosylation is found at Asn-639, Asn-672, and Asn-692. Glu-705 (nucleophile) is an active-site residue.

This sequence belongs to the glycosyl hydrolase 5 (cellulase A) family.

The protein localises to the cell membrane. The enzyme catalyses Successive hydrolysis of beta-D-glucose units from the non-reducing ends of (1-&gt;3)-beta-D-glucans, releasing alpha-glucose.. Functionally, glucosidase involved in the degradation of cellulosic biomass. Active on lichenan. The polypeptide is Probable glucan 1,3-beta-glucosidase D (exgD) (Neosartorya fischeri (strain ATCC 1020 / DSM 3700 / CBS 544.65 / FGSC A1164 / JCM 1740 / NRRL 181 / WB 181) (Aspergillus fischerianus)).